The primary structure comprises 483 residues: UDP-N-acetylmuramoyl-L-alanyl-D-glutamate--2,6-diaminopimelate ligase (483 aa).

Residue serine 29 coordinates UDP-N-acetyl-alpha-D-muramoyl-L-alanyl-D-glutamate. 107 to 113 (GTSGKTS) provides a ligand contact to ATP. Residues 149–150 (TT), serine 176, glutamine 182, and arginine 184 each bind UDP-N-acetyl-alpha-D-muramoyl-L-alanyl-D-glutamate. Residue lysine 216 is modified to N6-carboxylysine. Meso-2,6-diaminopimelate contacts are provided by residues arginine 380, 404-407 (DNPR), glycine 452, and glutamate 456. The short motif at 404-407 (DNPR) is the Meso-diaminopimelate recognition motif element.

The protein belongs to the MurCDEF family. MurE subfamily. Mg(2+) is required as a cofactor. Carboxylation is probably crucial for Mg(2+) binding and, consequently, for the gamma-phosphate positioning of ATP.

It is found in the cytoplasm. The catalysed reaction is UDP-N-acetyl-alpha-D-muramoyl-L-alanyl-D-glutamate + meso-2,6-diaminopimelate + ATP = UDP-N-acetyl-alpha-D-muramoyl-L-alanyl-gamma-D-glutamyl-meso-2,6-diaminopimelate + ADP + phosphate + H(+). It functions in the pathway cell wall biogenesis; peptidoglycan biosynthesis. Catalyzes the addition of meso-diaminopimelic acid to the nucleotide precursor UDP-N-acetylmuramoyl-L-alanyl-D-glutamate (UMAG) in the biosynthesis of bacterial cell-wall peptidoglycan. This Chelativorans sp. (strain BNC1) protein is UDP-N-acetylmuramoyl-L-alanyl-D-glutamate--2,6-diaminopimelate ligase.